Reading from the N-terminus, the 318-residue chain is Cytochrome c biogenesis protein CcsA (318 aa).

The next 8 helical transmembrane spans lie at 17–37 (VLAL…ISFW), 45–65 (SAVV…QLVL), 75–95 (ISNL…AQLL), 104–124 (IVSA…SFAL), 149–169 (VIMC…AVLF), 224–244 (TITV…VWAN), 258–275 (TWAL…HTRF), and 287–307 (VAVA…LLGI).

It belongs to the CcmF/CycK/Ccl1/NrfE/CcsA family. As to quaternary structure, may interact with ccs1.

The protein resides in the cellular thylakoid membrane. Functionally, required during biogenesis of c-type cytochromes (cytochrome c6 and cytochrome f) at the step of heme attachment. The protein is Cytochrome c biogenesis protein CcsA of Prochlorococcus marinus (strain MIT 9303).